Here is a 451-residue protein sequence, read N- to C-terminus: AAA-ATPase At3g50940 (451 aa).

A signal peptide spans 1-25 (MSSSSESHLATAKTALTAVASVAAA). 254–261 (GPPGTGKS) is a binding site for ATP.

Belongs to the AAA ATPase family. BCS1 subfamily. The cofactor is Mg(2+).

The catalysed reaction is ATP + H2O = ADP + phosphate + H(+). This chain is AAA-ATPase At3g50940, found in Arabidopsis thaliana (Mouse-ear cress).